Consider the following 344-residue polypeptide: UDP-N-acetylglucosamine transporter UGNT1 (344 aa).

The segment at 1 to 23 (MRNNPVLPVSDPPLAGENDSDGK) is disordered. The next 9 membrane-spanning stretches (helical) occupy residues 41–61 (YAAL…KAAL), 66–86 (FPCV…FLYA), 92–112 (IISF…FVPV), 114–134 (TLFH…ASMA), 167–187 (YTRS…FAGA), 194–214 (FYGY…LATI), 226–246 (FGLM…WTFI), 264–284 (FMVV…CIFL), and 304–324 (FTVG…MNVI).

This sequence belongs to the TPT transporter family. UGnT (TC 2.A.7.15) subfamily. As to expression, expressed in roots, leaves, stems, flowers and siliques.

It localises to the golgi apparatus membrane. Functionally, mediates the transport of UDP-N-acetylglucosamine (UDP-GlcNAc) across the Golgi apparatus membrane. Delivers an essential substrate for the maturation of N-glycans and the GlcNAc-containing glycosyl inositol phosphorylceramide (GIPC) class of sphingolipids in the Golgi apparatus. This chain is UDP-N-acetylglucosamine transporter UGNT1, found in Arabidopsis thaliana (Mouse-ear cress).